A 178-amino-acid chain; its full sequence is Large ribosomal subunit protein uL6 (178 aa).

Belongs to the universal ribosomal protein uL6 family. As to quaternary structure, part of the 50S ribosomal subunit.

Functionally, this protein binds to the 23S rRNA, and is important in its secondary structure. It is located near the subunit interface in the base of the L7/L12 stalk, and near the tRNA binding site of the peptidyltransferase center. The sequence is that of Large ribosomal subunit protein uL6 from Corynebacterium glutamicum (strain R).